Consider the following 195-residue polypeptide: Granulocyte colony-stimulating factor (195 aa).

The N-terminal stretch at 1 to 21 (MKLMVLQLLLWHSALWTVHEA) is a signal peptide. Intrachain disulfides connect C57-C63 and C85-C95. The O-linked (GalNAc...) threonine glycan is linked to T154.

It belongs to the IL-6 superfamily. Monomer. Post-translationally, O-glycosylated.

The protein localises to the secreted. Granulocyte/macrophage colony-stimulating factors are cytokines that act in hematopoiesis by controlling the production, differentiation, and function of 2 related white cell populations of the blood, the granulocytes and the monocytes-macrophages. This CSF induces granulocytes. The protein is Granulocyte colony-stimulating factor (CSF3) of Bos taurus (Bovine).